Reading from the N-terminus, the 293-residue chain is Epimerase family protein SDR39U1 (293 aa).

NADP(+)-binding positions include 31-32, 58-59, E77, R82, and V160; these read SR and LA.

Belongs to the NAD(P)-dependent epimerase/dehydratase family. SDR39U1 subfamily. As to expression, expressed in adrenal gland.

In terms of biological role, putative NADP-dependent oxidoreductase. The protein is Epimerase family protein SDR39U1 (SDR39U1) of Homo sapiens (Human).